Here is a 664-residue protein sequence, read N- to C-terminus: Macoilin (664 aa).

The next 4 helical transmembrane spans lie at 28–48 (TFLY…DFVL), 75–95 (AFSV…LLFI), 120–140 (VCLP…AIRF), and 154–174 (FAAH…KSYV). The segment covering 253–265 (REKGKEKDKDAKK) has biased composition (basic and acidic residues). The segment at 253–274 (REKGKEKDKDAKKHNLGINNNN) is disordered. Ser-305 bears the Phosphoserine mark. The span at 320-348 (KNYKNASGVVNSSPRSHSATNGSIPSSSS) shows a compositional bias: polar residues. Positions 320–375 (KNYKNASGVVNSSPRSHSATNGSIPSSSSKNEKKQKCTSKSPSTHKDLMENCIPNN) are disordered. Asn-324 is a glycosylation site (N-linked (GlcNAc...) asparagine). Ser-332 is subject to Phosphoserine. Asn-340 and Asn-452 each carry an N-linked (GlcNAc...) asparagine glycan. Positions 630–664 (TSPLSPVSPHYSSKFVETSPSGLDPNASVYQPLKK) are disordered. Residues Ser-631 and Ser-634 each carry the phosphoserine modification. Asn-655 is a glycosylation site (N-linked (GlcNAc...) asparagine).

The protein belongs to the macoilin family.

Its subcellular location is the rough endoplasmic reticulum membrane. It is found in the nucleus membrane. In terms of biological role, plays a role in the regulation of neuronal activity. This chain is Macoilin (MACO1), found in Canis lupus familiaris (Dog).